The primary structure comprises 628 residues: 1-deoxy-D-xylulose-5-phosphate synthase (628 aa).

Thiamine diphosphate is bound by residues H72 and 113–115 (GHA). D144 contributes to the Mg(2+) binding site. Residues 145–146 (GA), N174, Y287, and E370 contribute to the thiamine diphosphate site. A Mg(2+)-binding site is contributed by N174.

Belongs to the transketolase family. DXPS subfamily. In terms of assembly, homodimer. Mg(2+) serves as cofactor. The cofactor is thiamine diphosphate.

It carries out the reaction D-glyceraldehyde 3-phosphate + pyruvate + H(+) = 1-deoxy-D-xylulose 5-phosphate + CO2. The protein operates within metabolic intermediate biosynthesis; 1-deoxy-D-xylulose 5-phosphate biosynthesis; 1-deoxy-D-xylulose 5-phosphate from D-glyceraldehyde 3-phosphate and pyruvate: step 1/1. In terms of biological role, catalyzes the acyloin condensation reaction between C atoms 2 and 3 of pyruvate and glyceraldehyde 3-phosphate to yield 1-deoxy-D-xylulose-5-phosphate (DXP). This is 1-deoxy-D-xylulose-5-phosphate synthase from Prochlorococcus marinus (strain NATL2A).